Here is a 223-residue protein sequence, read N- to C-terminus: Ribose-5-phosphate isomerase A (223 aa).

Substrate is bound by residues 29–32 (TGST), 82–85 (DGAD), and 95–98 (KGGG). Glutamate 104 (proton acceptor) is an active-site residue. Lysine 122 is a substrate binding site.

The protein belongs to the ribose 5-phosphate isomerase family. In terms of assembly, homodimer.

The enzyme catalyses aldehydo-D-ribose 5-phosphate = D-ribulose 5-phosphate. It functions in the pathway carbohydrate degradation; pentose phosphate pathway; D-ribose 5-phosphate from D-ribulose 5-phosphate (non-oxidative stage): step 1/1. Its function is as follows. Catalyzes the reversible conversion of ribose-5-phosphate to ribulose 5-phosphate. The protein is Ribose-5-phosphate isomerase A of Neisseria meningitidis serogroup C (strain 053442).